A 331-amino-acid polypeptide reads, in one-letter code: D-galactose/methyl-galactoside binding periplasmic protein MglB (331 aa).

A signal peptide spans 1–24 (MKKTAVLSTVAFAIALGSASASFA). Residues D38 and N115 each contribute to the beta-D-galactose site. D38 and N115 together coordinate beta-D-glucose. D158, N160, D162, K164, and Q166 together coordinate Ca(2+). The beta-D-galactose site is built by H176, D178, and R182. The beta-D-glucose site is built by H176, D178, and R182. A Ca(2+)-binding site is contributed by E229. Residues N235, D259, and N279 each contribute to the beta-D-galactose site. Beta-D-glucose contacts are provided by N235, D259, and N279.

This sequence belongs to the bacterial solute-binding protein 2 family. As to quaternary structure, the ABC transporter complex is composed of one ATP-binding protein (MglA), two transmembrane proteins (MglC) and a solute-binding protein (MglB).

Its subcellular location is the periplasm. Its function is as follows. Part of the ABC transporter complex MglABC involved in galactose/methyl galactoside import. This Haemophilus influenzae (strain ATCC 51907 / DSM 11121 / KW20 / Rd) protein is D-galactose/methyl-galactoside binding periplasmic protein MglB (mglB).